Reading from the N-terminus, the 379-residue chain is Nucleosome assembly protein 1;2 (379 aa).

Positions 26-80 (VNALKNKLQNLAGQHSDVLENLTPPVRKRVEFLREIQNQYDEMEAKFFEERAALE) form a coiled coil. The residue at position 41 (S41) is a Phosphoserine. The short motif at 47–62 (LTPPVRKRVEFLREIQ) is the Nuclear export signal element. Positions 222 to 227 (KKKPKK) match the Nuclear localization signal motif. A disordered region spans residues 298–379 (AVEADDLDIE…GERPPECKQQ (82 aa)). The span at 299–342 (VEADDLDIEDDDDEIDEDDDEEDEEDDEDDEEEDDEDDDEEEEA) shows a compositional bias: acidic residues. Residues 347-360 (KSKKKSSAGHKKAG) are compositionally biased toward basic residues. C376 carries the cysteine methyl ester modification. The S-farnesyl cysteine moiety is linked to residue C376. Positions 377-379 (KQQ) are cleaved as a propeptide — removed in mature form.

This sequence belongs to the nucleosome assembly protein (NAP) family. As to quaternary structure, can form homomeric and heteromeric protein complexes with NAP1;1, NAP1;3 and NAP1;4. Binds histone H2A. As to expression, ubiquitous.

Its subcellular location is the nucleus. The protein resides in the cytoplasm. May modulate chromatin structure by regulation of nucleosome assembly/disassembly. May function in nucleotide excision repair (NER). Involved in somatic homologous recombination. The chain is Nucleosome assembly protein 1;2 (NAP1;2) from Arabidopsis thaliana (Mouse-ear cress).